The following is a 438-amino-acid chain: Na(+)/H(+) antiporter NhaA (438 aa).

11 helical membrane passes run 23-43, 62-82, 104-124, 133-153, 162-182, 185-205, 221-241, 302-322, 337-357, 372-392, and 410-430; these read FGGIFLFLNAVLAMVVANSFL, FFIGFSLHNWIDDVLMALFFL, SFPVIAAIGGMIAPGLIYFFL, GFGIPMATDIAFALGVIMLLG, VFLITLAVADDLGAIVVIALF, TNLKFAWLLGALGVVLILAVL, VLLWFCVHQSGIHATIAAVIL, FLAPISGYFIMPLFAFANAGV, LGVILGLCLGKPLGIFLITFI, WWHILGAGLLAGIGFTMSMFI, and IAILLGSLISGIIGALYLFAL.

It belongs to the NhaA Na(+)/H(+) (TC 2.A.33) antiporter family.

Its subcellular location is the cell inner membrane. It carries out the reaction Na(+)(in) + 2 H(+)(out) = Na(+)(out) + 2 H(+)(in). In terms of biological role, na(+)/H(+) antiporter that extrudes sodium in exchange for external protons. The sequence is that of Na(+)/H(+) antiporter NhaA from Helicobacter pylori (strain HPAG1).